The following is a 313-amino-acid chain: MAVNQSHTESRRGALIPSGESVLKQCEDVDLCFLQKPVESYLFNGTKKGTLFLTSYRVVFVTSHLVNDPMLSFMMPFGLMSDCTIEQPIFAPNYIKGTIQAAPGGGWEGQAVFKLSFRKGGAIEFAQLMVKAASAAARGIPLGSVNYWFDTSGLYIITVPGAAVCSSQTPCPAYPIVIYGPPPPGYTVQPGEYGTPPEGYGAQPGGYGAPPMGYGAPPVGYGVPPGGYGVPPGGYGVPPGGYGAPPGGYGVPPGGYGAPPGGYGAPPAGYGAPPAGNEALPPAYEAPSAGNTAASHRSMTAQQETSLPTTSSS.

A GRAM domain is found at 8–87; it reads TESRRGALIP…GLMSDCTIEQ (80 aa). 12 consecutive repeat copies span residues 179–185, 193–199, 207–213, 214–220, 221–227, 228–234, 235–241, 242–248, 249–255, 256–262, 263–269, and 270–276. The tract at residues 179–276 is 12 X 7 AA tandem repeat of Y-G-X-P-P-X-G; it reads YGPPPPGYTV…PAGYGAPPAG (98 aa). Residues 183-186 carry the PPxY motif 1 motif; the sequence is PPGY. Positions 254-264 are enriched in gly residues; it reads GGYGAPPGGYG. Residues 254 to 313 form a disordered region; that stretch reads GGYGAPPGGYGAPPAGYGAPPAGNEALPPAYEAPSAGNTAASHRSMTAQQETSLPTTSSS. Residues 265–276 show a composition bias toward low complexity; the sequence is APPAGYGAPPAG. The PPxY motif 2 motif lies at 281 to 284; that stretch reads PPAY. Residues 289 to 313 show a composition bias toward polar residues; sequence AGNTAASHRSMTAQQETSLPTTSSS.

In terms of tissue distribution, expressed in testis.

Functionally, may play a role in meiotic resumption and pronuclear formation, mediated by a WW domain-signaling pathway during fertilization. The protein is Postacrosomal sheath WW domain-binding protein (WBP2NL) of Bos taurus (Bovine).